Reading from the N-terminus, the 313-residue chain is Methionyl-tRNA formyltransferase (313 aa).

109 to 112 contacts (6S)-5,6,7,8-tetrahydrofolate; that stretch reads SLLP.

It belongs to the Fmt family.

The catalysed reaction is L-methionyl-tRNA(fMet) + (6R)-10-formyltetrahydrofolate = N-formyl-L-methionyl-tRNA(fMet) + (6S)-5,6,7,8-tetrahydrofolate + H(+). In terms of biological role, attaches a formyl group to the free amino group of methionyl-tRNA(fMet). The formyl group appears to play a dual role in the initiator identity of N-formylmethionyl-tRNA by promoting its recognition by IF2 and preventing the misappropriation of this tRNA by the elongation apparatus. This Thermotoga sp. (strain RQ2) protein is Methionyl-tRNA formyltransferase.